A 681-amino-acid chain; its full sequence is Secretion system apparatus protein SsaV (681 aa).

The next 7 helical transmembrane spans lie at 24 to 44 (MVLA…LPTW), 48 to 68 (ILIT…IYLS), 73 to 93 (LSVF…LTIS), 118 to 138 (GNLT…FIVI), 206 to 226 (TIAG…IAIV), 244 to 264 (IGDG…AGII), and 295 to 315 (AVVL…LAFF).

Belongs to the FHIPEP (flagella/HR/invasion proteins export pore) family.

It is found in the cell inner membrane. Functionally, component of Salmonella pathogenicity island 2 (SPI-2) type III secretion system, required for secretion of some type III-secreted effectors including the SpvB exotoxin. This chain is Secretion system apparatus protein SsaV (ssaV), found in Salmonella typhimurium (strain 14028s / SGSC 2262).